Reading from the N-terminus, the 195-residue chain is Interferon tau (195 aa).

The first 23 residues, 1–23 (MAFVLSLRMALVLVSYCPGGSLG), serve as a signal peptide directing secretion. Intrachain disulfides connect cysteine 24-cysteine 122 and cysteine 52-cysteine 162. A glycan (N-linked (GlcNAc...) asparagine) is linked at asparagine 101.

This sequence belongs to the alpha/beta interferon family. IFN-alphaII subfamily. Constitutively and exclusively expressed in the mononuclear cells of the extraembryonic trophectoderm.

The protein localises to the secreted. Paracrine hormone primarily responsible for maternal recognition of pregnancy. Interacts with endometrial receptors, probably type I interferon receptors, and blocks estrogen receptor expression, preventing the estrogen-induced increase in oxytocin receptor expression in the endometrium. This results in the suppression of the pulsatile endometrial release of the luteolytic hormone prostaglandin F2-alpha, hindering the regression of the corpus luteum (luteolysis) and therefore a return to ovarian cyclicity. This, and a possible direct effect of IFN-tau on prostaglandin synthesis, leads in turn to continued ovarian progesterone secretion, which stimulates the secretion by the endometrium of the nutrients required for the growth of the conceptus. In summary, displays particularly high antiviral and antiproliferative potency concurrently with particular weak cytotoxicity, high antiluteolytic activity and immunomodulatory properties. In contrast with other IFNs, IFN-tau is not virally inducible. The chain is Interferon tau (IFNT) from Ovibos moschatus (Muskox).